We begin with the raw amino-acid sequence, 204 residues long: Glideosome-associated protein 45 (204 aa).

The interval 1-86 (MGNKCSRSKV…KEEIDYATQE (86 aa)) is disordered. A lipid anchor (N-myristoyl glycine) is attached at Gly-2. A targets GAP45 to the cell membrane; however, dispensable for the formation of the glideosome complex and the association with the inner membrane complex region spans residues 2–29 (GNKCSRSKVKEPKRKDIDELAERENLKK). Positions 9 to 53 (KVKEPKRKDIDELAERENLKKQSEEIIEEKPEEVVEQVEETHEEP) are enriched in basic and acidic residues. The span at 54 to 73 (LEQEQELDEQKIEEEEEEPE) shows a compositional bias: acidic residues. Phosphoserine; by CPK10 is present on Ser-89. Ser-103 carries the phosphoserine; by CPK10 and PKB modification. Ser-149 carries the phosphoserine; by CPK10 modification.

In terms of assembly, component of the glideosome complex composed of GAP50, GAP45, MTIP and MyoA; the complex is formed during the late schizont stage and in merozoites. MyoA, MTIP and GAP45 probably form an initial complex in the cytoplasm which is then recruited to the outer face of the inner membrane complex via the interaction with GAP50. Interacts with GAP50; the interaction is independent of GAP45 phosphorylation status and can also occur independently of the formation of the glideosome complex. Post-translationally, phosphorylated at multiple sites. Phosphorylation increases during the schizont stage and peaks in segmented merozoites. May be phosphorylated by PKB. In schizonts, phosphorylated at Ser-89 and Ser-149 in response to phospholipase C-mediated calcium release. Phosphorylation at Ser-149 begins in early schizonts while phosphorylation at Ser-103 begins in late schizonts. Phosphorylation at Ser-89, Ser-103 and Ser-149 appears to be dispensable for GAP45 inner membrane complex localization or GAP45 inclusion in the glideosome complex. Phosphorylation is not required for interaction with GAP50; however, it may regulate the interaction with MTIP and MyoA. N-myristoylated by NMT. N-myristoylation may contribute to the targeting of GAP45 to the inner membrane complex with the subsequent palmitoylation strengthening the interaction with the membrane. In terms of processing, palmitoylated. Palmitoylation appears to follow N-myristoylation and may strengthen the interaction with the inner membrane complex.

The protein localises to the inner membrane complex. Its function is as follows. Component of the glideosome complex, an inner membrane complex structure involved in parasite gliding motility and host cell invasion. During the asexual blood stage, required in schizonts to recruit MTIP and MyoA to the inner membrane complex where they assemble with GAP50 to form the glideosome complex. By regulating the formation of the glideosome, plays an essential role during merozoite invasion of host erythrocytes. This chain is Glideosome-associated protein 45, found in Plasmodium falciparum (isolate 3D7).